Consider the following 817-residue polypeptide: Anaphase-promoting complex subunit 4 (817 aa).

Y469 is modified (phosphotyrosine). Phosphoserine is present on residues S757 and S758. A Glycyl lysine isopeptide (Lys-Gly) (interchain with G-Cter in SUMO2) cross-link involves residue K772. Residues S777 and S779 each carry the phosphoserine modification. A Glycyl lysine isopeptide (Lys-Gly) (interchain with G-Cter in SUMO2) cross-link involves residue K798.

This sequence belongs to the APC4 family. The mammalian APC/C is composed at least of 14 distinct subunits ANAPC1, ANAPC2, CDC27/APC3, ANAPC4, ANAPC5, CDC16/APC6, ANAPC7, CDC23/APC8, ANAPC10, ANAPC11, CDC26/APC12, ANAPC13, ANAPC15 and ANAPC16 that assemble into a complex of at least 19 chains with a combined molecular mass of around 1.2 MDa; APC/C interacts with FZR1 and FBXO5. In the context of the APC/C complex, directly interacts with UBE2S.

The protein resides in the nucleus. It participates in protein modification; protein ubiquitination. Component of the anaphase promoting complex/cyclosome (APC/C), a cell cycle-regulated E3 ubiquitin ligase that controls progression through mitosis and the G1 phase of the cell cycle. The APC/C complex acts by mediating ubiquitination and subsequent degradation of target proteins: it mainly mediates the formation of 'Lys-11'-linked polyubiquitin chains and, to a lower extent, the formation of 'Lys-48'- and 'Lys-63'-linked polyubiquitin chains. The APC/C complex catalyzes assembly of branched 'Lys-11'-/'Lys-48'-linked branched ubiquitin chains on target proteins. The chain is Anaphase-promoting complex subunit 4 (ANAPC4) from Pongo abelii (Sumatran orangutan).